Here is a 359-residue protein sequence, read N- to C-terminus: Peptide chain release factor 1 (359 aa).

Gln-235 bears the N5-methylglutamine mark. The segment at 283-309 is disordered; sequence QKAESERSQARRSQVGSGDRSERIRTY.

The protein belongs to the prokaryotic/mitochondrial release factor family. In terms of processing, methylated by PrmC. Methylation increases the termination efficiency of RF1.

The protein localises to the cytoplasm. Peptide chain release factor 1 directs the termination of translation in response to the peptide chain termination codons UAG and UAA. This Brucella canis (strain ATCC 23365 / NCTC 10854 / RM-666) protein is Peptide chain release factor 1.